We begin with the raw amino-acid sequence, 336 residues long: Potassium channel subfamily K member 1 (336 aa).

The Cytoplasmic segment spans residues 1–20; the sequence is MLQSLAGSSCVRLVERHRSA. A helical membrane pass occupies residues 21 to 41; sequence WCFGFLVLGYLLYLVFGAVVF. At 42–103 the chain is on the extracellular side; that stretch reads SSVELPYEDL…SNASGNWNWD (62 aa). N95 carries an N-linked (GlcNAc...) asparagine glycan. Positions 104 to 116 form an intramembrane region, helical; sequence FTSALFFASTVLS. An intramembrane segment occupies 117-122; it reads TTGYGH. The segment at 117–122 is selectivity filter 1; the sequence is TTGYGH. Residues 123-132 lie on the Extracellular side of the membrane; that stretch reads TVPLSDGGKA. Residues 133–156 form a helical membrane-spanning segment; the sequence is FCIIYSVIGIPFTLLFLTAVVQRI. Residues 157–181 are Cytoplasmic-facing; sequence TVHVTRRPVLYFHIRWGFSKQVVAI. A helical transmembrane segment spans residues 182–202; it reads VHAVLLGFVTVSCFFFIPAAV. At 203–211 the chain is on the extracellular side; sequence FSVLEDDWN. The helical intramembrane region spans 212 to 224; that stretch reads FLESFYFCFISLS. The segment at 225–230 is selectivity filter 2; the sequence is TIGLGD. An intramembrane segment occupies 225-231; that stretch reads TIGLGDY. Topologically, residues 232 to 243 are extracellular; sequence VPGEGYNQKFRE. A helical transmembrane segment spans residues 244–267; sequence LYKIGITCYLLLGLIAMLVVLETF. Topologically, residues 268–336 are cytoplasmic; that stretch reads CELHELKKFR…SACVDGPANH (69 aa). K274 participates in a covalent cross-link: Glycyl lysine isopeptide (Lys-Gly) (interchain with G-Cter in SUMO). The tract at residues 293–299 is important for intracellular retention in recycling endosomes; sequence IIEHDQL. S326 bears the Phosphoserine mark.

The protein belongs to the two pore domain potassium channel (TC 1.A.1.8) family. As to quaternary structure, homodimer; disulfide-linked. Heterodimer with KCNK2; disulfide-linked. In astrocytes, forms mostly heterodimeric potassium channels with KCNK2, with only a minor proportion of functional channels containing homodimeric KCNK1. Interacts with KCNK3 and KCNK9, forming functional heterodimeric channels. Interacts with GNG4. Identified in a complex with PSD and ARF6; interacts only with PSD that is bound to ARF6. Interacts with UBE2I. In terms of processing, sumoylation is controversial. Sumoylated by UBE2I. Not sumoylated when expressed in xenopus oocytes or mammalian cells. Sumoylation inactivates the channel, but does not interfere with expression at the cell membrane. Sumoylation of a single subunit is sufficient to silence the dimeric channel. Sumoylation of KCNK1 is sufficient to silence heterodimeric channels formed by KCNK1 and KCNK3 or KCNK9. Desumoylated by SENP1; this activates the channel. Desumoylated by SENP1; this strongly increases halothane-mediated activation of heterodimeric channels formed with KCNK9. SENP1 treatment has no effect. As to expression, detected in bronchial epithelial cells. Detected in heart left atrium and left ventricle. Detected in cardiac myocytes (at protein level). Widely expressed with high levels in heart, brain and kidney, and lower levels in colon, ovary, placenta, lung and liver. Highly expressed in cerebellum, and detected at lower levels in amygdala, caudate nucleus, brain cortex, hippocampus, putamen, substantia nigra, thalamus, dorsal root ganglion, spinal cord, pituitary, heart, kidney, lung, placenta, pancreas, stomach, small intestine, uterus and prostate. Detected in right and left heart ventricle and atrium, and in heart Purkinje fibers.

Its subcellular location is the cell membrane. It is found in the recycling endosome. The protein resides in the synaptic cell membrane. The protein localises to the cytoplasmic vesicle. It localises to the perikaryon. Its subcellular location is the cell projection. It is found in the dendrite. The protein resides in the apical cell membrane. The enzyme catalyses K(+)(in) = K(+)(out). The catalysed reaction is NH4(+)(in) = NH4(+)(out). It catalyses the reaction Na(+)(in) = Na(+)(out). It carries out the reaction Rb(+)(in) = Rb(+)(out). The enzyme catalyses Cs(+)(in) = Cs(+)(out). The catalysed reaction is Li(+)(in) = Li(+)(out). It catalyses the reaction L-glutamate(out) = L-glutamate(in). It carries out the reaction chloride(in) = chloride(out). Inhibited by Ba(2+) ions and quinidine. Inhibited by quinine. Is slightly inhibited by 10 mM tetraethylammonium (TEA), and only marginally inhibited by 4-aminopyridine, charybdotoxin and dendrotoxin. Lowering the extracellular pH to below 6.5 transiently activates the channel, and then inhibits channel activity. Inhibited when the intracellular pH is decreased down to pH 6.0, but this may be due to indirect effects. In terms of biological role, ion channel that contributes to passive transmembrane potassium transport and to the regulation of the resting membrane potential in brain astrocytes, but also in kidney and in other tissues. Forms dimeric channels through which potassium ions pass in accordance with their electrochemical gradient. The channel is selective for K(+) ions at physiological potassium concentrations and at neutral pH, but becomes permeable to Na(+) at subphysiological K(+) levels and upon acidification of the extracellular medium. The homodimer has very low potassium channel activity, when expressed in heterologous systems, and can function as weakly inward rectifying potassium channel. Channel activity is modulated by activation of serotonin receptors. Heterodimeric channels containing KCNK1 and KCNK2 have much higher activity, and may represent the predominant form in astrocytes. Heterodimeric channels containing KCNK1 and KCNK3 or KCNK9 have much higher activity. Heterodimeric channels formed by KCNK1 and KCNK9 may contribute to halothane-sensitive currents. Mediates outward rectifying potassium currents in dentate gyrus granule cells and contributes to the regulation of their resting membrane potential. Contributes to the regulation of action potential firing in dentate gyrus granule cells and down-regulates their intrinsic excitability. In astrocytes, the heterodimer formed by KCNK1 and KCNK2 is required for rapid glutamate release in response to activation of G-protein coupled receptors, such as F2R and CNR1. Required for normal ion and water transport in the kidney. Contributes to the regulation of the resting membrane potential of pancreatic beta cells. The low channel activity of homodimeric KCNK1 may be due to sumoylation. The low channel activity may be due to rapid internalization from the cell membrane and retention in recycling endosomes. Permeable to monovalent cations with ion selectivity for K(+) &gt; Rb(+) &gt;&gt; NH4(+) &gt;&gt; Cs(+) = Na(+) = Li(+). The protein is Potassium channel subfamily K member 1 (KCNK1) of Homo sapiens (Human).